We begin with the raw amino-acid sequence, 527 residues long: Bifunctional purine biosynthesis protein PurH (527 aa).

Positions 1 to 144 (MNRRALISVS…KNHESVAIIV (144 aa)) constitute an MGS-like domain.

The protein belongs to the PurH family.

The catalysed reaction is (6R)-10-formyltetrahydrofolate + 5-amino-1-(5-phospho-beta-D-ribosyl)imidazole-4-carboxamide = 5-formamido-1-(5-phospho-D-ribosyl)imidazole-4-carboxamide + (6S)-5,6,7,8-tetrahydrofolate. The enzyme catalyses IMP + H2O = 5-formamido-1-(5-phospho-D-ribosyl)imidazole-4-carboxamide. Its pathway is purine metabolism; IMP biosynthesis via de novo pathway; 5-formamido-1-(5-phospho-D-ribosyl)imidazole-4-carboxamide from 5-amino-1-(5-phospho-D-ribosyl)imidazole-4-carboxamide (10-formyl THF route): step 1/1. It participates in purine metabolism; IMP biosynthesis via de novo pathway; IMP from 5-formamido-1-(5-phospho-D-ribosyl)imidazole-4-carboxamide: step 1/1. This chain is Bifunctional purine biosynthesis protein PurH, found in Heliobacterium modesticaldum (strain ATCC 51547 / Ice1).